The sequence spans 469 residues: Deoxyribodipyrimidine photo-lyase (469 aa).

One can recognise a Photolyase/cryptochrome alpha/beta domain in the interval 1–133 (MRLVWFRRDL…IWSAFDDKCV (133 aa)). E107 serves as a coordination point for (6R)-5,10-methylene-5,6,7,8-tetrahydrofolate.

Belongs to the DNA photolyase class-1 family. As to quaternary structure, monomer. Requires FAD as cofactor. (6R)-5,10-methylene-5,6,7,8-tetrahydrofolate is required as a cofactor.

The enzyme catalyses cyclobutadipyrimidine (in DNA) = 2 pyrimidine residues (in DNA).. Functionally, involved in repair of UV radiation-induced DNA damage. Catalyzes the light-dependent monomerization (300-600 nm) of cyclobutyl pyrimidine dimers (in cis-syn configuration), which are formed between adjacent bases on the same DNA strand upon exposure to ultraviolet radiation. The polypeptide is Deoxyribodipyrimidine photo-lyase (phrA) (Vibrio cholerae serotype O1 (strain ATCC 39315 / El Tor Inaba N16961)).